The primary structure comprises 1230 residues: Soluble starch synthase 3, chloroplastic/amyloplastic (1230 aa).

The N-terminal 60 residues, 1 to 60 (MDVPFPLHRSLSCTSVSNAITHLKIKPILGFVSHGTTSLSVQSSSWRKDGMVTGVSFSIC), are a transit peptide targeting the chloroplast. A disordered region spans residues 66–189 (RRRRKVSTPR…KDAVKLNKSK (124 aa)). Residues 124 to 145 (VEARVETSDDDTKGVVRDHKFL) are compositionally biased toward basic and acidic residues. The segment covering 152–170 (NGSTKSISMSPVRVSSQFV) has biased composition (polar residues). Residues 177–189 (GDDKDAVKLNKSK) are compositionally biased toward basic and acidic residues. Residue K794 coordinates ADP-alpha-D-glucose.

It belongs to the glycosyltransferase 1 family. Bacterial/plant glycogen synthase subfamily. As to expression, tuber, sink and source leaves.

The protein resides in the plastid. The protein localises to the chloroplast. Its subcellular location is the amyloplast. It catalyses the reaction [(1-&gt;4)-alpha-D-glucosyl](n) + ADP-alpha-D-glucose = [(1-&gt;4)-alpha-D-glucosyl](n+1) + ADP + H(+). Its pathway is glycan biosynthesis; starch biosynthesis. In terms of biological role, may account for most of the soluble starch synthase activity in the tubers. Contributes only a tiny percentage of the granule-bound activity, but may also contribute to the deposition of transient starch in chloroplasts of leaves. The protein is Soluble starch synthase 3, chloroplastic/amyloplastic (SS3) of Solanum tuberosum (Potato).